A 408-amino-acid polypeptide reads, in one-letter code: Substance-P receptor (408 aa).

Topologically, residues 1–32 (MNSNISAQNDSALNSTIQNGTKINQFIQPPWQ) are extracellular. Residues N4, N9, N14, and N19 are each glycosylated (N-linked (GlcNAc...) asparagine). The chain crosses the membrane as a helical span at residues 33–55 (IALWSVAYSIIVIVSLVGNIIVM). At 56-65 (WIIIAHKRMR) the chain is on the cytoplasmic side. A helical transmembrane segment spans residues 66–87 (TVTNYFLVNLAFAEASMSAFNT). The Extracellular segment spans residues 88-107 (VINFTYAIHNHWYYGLIYCK). The cysteines at positions 106 and 181 are disulfide-linked. A helical membrane pass occupies residues 108–129 (FHNFFPISAVFTSIYSMTAIAL). Residues 130–149 (DRYMAIIHPLKPRLSATATK) are Cytoplasmic-facing. The chain crosses the membrane as a helical span at residues 150–170 (IVICVIWSFSFCMAFPLGYYA). Residues 171–196 (DVYPMEGGDICYLNWPDSEENRKYEQ) are Extracellular-facing. Residues 197 to 221 (VYQVLVFCLIYILPLLVIGCAYTFI) traverse the membrane as a helical segment. Residues 222 to 250 (GMTLWASEIPGDSSDRYHEQVVAKRKVVK) lie on the Cytoplasmic side of the membrane. A helical membrane pass occupies residues 251–272 (MMIVVVCTFAICWLPFHIFFLL). The Extracellular segment spans residues 273 to 283 (QTLHEMTQKFY). A helical membrane pass occupies residues 284–308 (QQFYLAIMWLAMSSTMYNPIIYCCL). Over 309–408 (NDRFRIGFKH…SSSFYSNNLA (100 aa)) the chain is Cytoplasmic. Residue C323 is the site of S-palmitoyl cysteine attachment. The disordered stretch occupies residues 366 to 408 (DEEAEENGKSSKRLSLDLTSNGSSRSVCKTMSDSSSFYSNNLA). Over residues 382–408 (DLTSNGSSRSVCKTMSDSSSFYSNNLA) the composition is skewed to polar residues.

It belongs to the G-protein coupled receptor 1 family.

Its subcellular location is the cell membrane. In terms of biological role, this is a receptor for the tachykinin neuropeptide substance P. It is probably associated with G proteins that activate a phosphatidylinositol-calcium second messenger system. This Aquarana catesbeiana (American bullfrog) protein is Substance-P receptor (TACR1).